The sequence spans 435 residues: MHYYCISFTHKNTDIATREKLSFSNEDKKRELLKLIHTNNKILESLVLSTCNRVEIFLFVGDVESINEHILKTLSLLCGVDRENLSTKADFYEDSGAIHHLFSVASSLDSLVIGETQIAGQLKDAYKFALQEQRCGVHLTRAVHYAFKCAANVRNQTEISKNPISVASVAVAKAKELVNLENKTAVVVGAGEMSELACKHLLNAKAKVLILNRDIQNAQKLCEDLGENASYESIANLKEALNQYEIFFSATNAPHAIITNDLLEEKDYSRYFFDIAVPRDIDVKANEKNIVYAVDDLEEVVRKNLTLREHQAQIAYSIVGTMTNEFFQHLSKLATLPLVKQLRLQADEIAKEQLQKAIDKGYLKHSNHEEARKLIRQVMNAFLHHPSVNLKKLSGTMQNDSVINAMRYVFDLKNENMEGLNLYKCEFNLENNHEI.

Substrate contacts are provided by residues 50-53 (TCNR), S110, 115-117 (ETQ), and Q121. The Nucleophile role is filled by C51. NADP(+) is bound at residue 189–194 (GAGEMS).

The protein belongs to the glutamyl-tRNA reductase family. As to quaternary structure, homodimer.

The catalysed reaction is (S)-4-amino-5-oxopentanoate + tRNA(Glu) + NADP(+) = L-glutamyl-tRNA(Glu) + NADPH + H(+). Its pathway is porphyrin-containing compound metabolism; protoporphyrin-IX biosynthesis; 5-aminolevulinate from L-glutamyl-tRNA(Glu): step 1/2. Functionally, catalyzes the NADPH-dependent reduction of glutamyl-tRNA(Glu) to glutamate 1-semialdehyde (GSA). This Campylobacter lari (strain RM2100 / D67 / ATCC BAA-1060) protein is Glutamyl-tRNA reductase.